The following is a 365-amino-acid chain: tRNA(Met) cytidine acetate ligase (365 aa).

Residues 7–20 (IAEF…HKYL), Gly-96, Asn-152, and Arg-175 each bind ATP.

Belongs to the TmcAL family.

It is found in the cytoplasm. It catalyses the reaction cytidine(34) in elongator tRNA(Met) + acetate + ATP = N(4)-acetylcytidine(34) in elongator tRNA(Met) + AMP + diphosphate. Its function is as follows. Catalyzes the formation of N(4)-acetylcytidine (ac(4)C) at the wobble position of elongator tRNA(Met), using acetate and ATP as substrates. First activates an acetate ion to form acetyladenylate (Ac-AMP) and then transfers the acetyl group to tRNA to form ac(4)C34. The chain is tRNA(Met) cytidine acetate ligase from Streptococcus pneumoniae (strain P1031).